We begin with the raw amino-acid sequence, 220 residues long: Probable nicotinate-nucleotide adenylyltransferase (220 aa).

The protein belongs to the NadD family.

It catalyses the reaction nicotinate beta-D-ribonucleotide + ATP + H(+) = deamido-NAD(+) + diphosphate. It participates in cofactor biosynthesis; NAD(+) biosynthesis; deamido-NAD(+) from nicotinate D-ribonucleotide: step 1/1. In terms of biological role, catalyzes the reversible adenylation of nicotinate mononucleotide (NaMN) to nicotinic acid adenine dinucleotide (NaAD). The protein is Probable nicotinate-nucleotide adenylyltransferase of Serratia proteamaculans (strain 568).